The following is a 442-amino-acid chain: DNA N(6)-methyladenine demethylase ALKBH1D (442 aa).

Positions Ser135–Pro144 are enriched in polar residues. Positions Ser135–Phe185 are disordered. The segment covering Ser145–Gln154 has biased composition (low complexity). Positions Lys157–Ser167 are enriched in basic residues. A compositionally biased stretch (basic and acidic residues) spans Lys170 to Pro183. In terms of domain architecture, Fe2OG dioxygenase spans Ser332–Phe442. Asn339–Tyr341 serves as a coordination point for 2-oxoglutarate. Fe cation contacts are provided by His350, Asp352, and His410. Arg434–Arg440 contacts 2-oxoglutarate.

The protein belongs to the alkB family. The cofactor is Fe(2+). As to expression, expressed at low levels in roots, seedlings and rosette leaves, but barely in cauline leaves, stems, siliques and flowers.

It is found in the nucleus. Its subcellular location is the cytoplasm. It catalyses the reaction an N(6)-methyl-2'-deoxyadenosine in DNA + 2-oxoglutarate + O2 = a 2'-deoxyadenosine in DNA + formaldehyde + succinate + CO2. Functionally, dioxygenase that catalyzes DNA N(6)-methyladenine (6 mA) demethylation to modulate gene expression and regulate seed germination. The polypeptide is DNA N(6)-methyladenine demethylase ALKBH1D (Arabidopsis thaliana (Mouse-ear cress)).